Consider the following 171-residue polypeptide: Peptide methionine sulfoxide reductase MsrA (171 aa).

Cys12 is an active-site residue.

This sequence belongs to the MsrA Met sulfoxide reductase family.

It catalyses the reaction L-methionyl-[protein] + [thioredoxin]-disulfide + H2O = L-methionyl-(S)-S-oxide-[protein] + [thioredoxin]-dithiol. The catalysed reaction is [thioredoxin]-disulfide + L-methionine + H2O = L-methionine (S)-S-oxide + [thioredoxin]-dithiol. Its function is as follows. Has an important function as a repair enzyme for proteins that have been inactivated by oxidation. Catalyzes the reversible oxidation-reduction of methionine sulfoxide in proteins to methionine. The polypeptide is Peptide methionine sulfoxide reductase MsrA (Leuconostoc mesenteroides subsp. mesenteroides (strain ATCC 8293 / DSM 20343 / BCRC 11652 / CCM 1803 / JCM 6124 / NCDO 523 / NBRC 100496 / NCIMB 8023 / NCTC 12954 / NRRL B-1118 / 37Y)).